The following is a 329-amino-acid chain: Serpentine receptor class alpha-2 (329 aa).

Transmembrane regions (helical) follow at residues 25 to 45 (FVYL…VKIL), 57 to 77 (ILLV…GIEA), 104 to 124 (YYKI…GLLI), 144 to 164 (CAVI…LIVW), 188 to 208 (HYFT…TFIL), 240 to 260 (FLTV…IVLV), and 273 to 293 (LLVV…VILV).

Belongs to the nematode receptor-like protein sra family.

It localises to the membrane. The polypeptide is Serpentine receptor class alpha-2 (sra-2) (Caenorhabditis elegans).